The primary structure comprises 403 residues: Phosphopentomutase (403 aa).

Mn(2+) contacts are provided by D13, D298, H303, D339, H340, and H351.

It belongs to the phosphopentomutase family. It depends on Mn(2+) as a cofactor.

Its subcellular location is the cytoplasm. It carries out the reaction 2-deoxy-alpha-D-ribose 1-phosphate = 2-deoxy-D-ribose 5-phosphate. The catalysed reaction is alpha-D-ribose 1-phosphate = D-ribose 5-phosphate. It participates in carbohydrate degradation; 2-deoxy-D-ribose 1-phosphate degradation; D-glyceraldehyde 3-phosphate and acetaldehyde from 2-deoxy-alpha-D-ribose 1-phosphate: step 1/2. Functionally, isomerase that catalyzes the conversion of deoxy-ribose 1-phosphate (dRib-1-P) and ribose 1-phosphate (Rib-1-P) to deoxy-ribose 5-phosphate (dRib-5-P) and ribose 5-phosphate (Rib-5-P), respectively. The protein is Phosphopentomutase of Streptococcus pneumoniae (strain Hungary19A-6).